Here is a 165-residue protein sequence, read N- to C-terminus: Short form salivary protein D7R4 (165 aa).

The first 21 residues, 1–21 (MIRQVITSYFLTVCLLALVQG), serve as a signal peptide directing secretion. Cystine bridges form between Cys-27-Cys-59, Cys-40-Cys-165, and Cys-98-Cys-117. 2 residues coordinate noradrenaline: Glu-28 and Arg-43. Glu-28 is a serotonin binding site. Serotonin contacts are provided by His-56, Tyr-115, Asp-132, and Glu-135. Positions 115, 132, and 135 each coordinate histamine. Tyr-115, Asp-132, and Glu-135 together coordinate tryptamine. Positions 132 and 135 each coordinate noradrenaline.

It belongs to the PBP/GOBP family. In terms of tissue distribution, female saliva (at protein level). Female salivary gland. Not detected in female carcass without salivary glands. Not detected in male tissues.

It localises to the secreted. Its function is as follows. Modulates blood feeding of female mosquitoes on vertebrate species by binding and sequestering different mediators involved in the host response. Binds serotonin, noradrenaline, histamine and tryptamine. Inhibits histamine-, serotonin- and partially noradrenaline-induced smooth muscle contraction. Exhibits vasodilating activity. This Anopheles gambiae (African malaria mosquito) protein is Short form salivary protein D7R4.